The primary structure comprises 122 residues: uncharacterized protein (122 aa).

Residues 93 to 113 (ILRICIVFLSLKIYTLTLVII) form a helical membrane-spanning segment.

The protein localises to the membrane. This is an uncharacterized protein from Saccharomyces cerevisiae (strain ATCC 204508 / S288c) (Baker's yeast).